The chain runs to 449 residues: MGRMFGTDGVRGVANKELTADLAYKLGKAGAFILTEGAHRPKILVGMDTRISGDMLESALVAGILSVGAEAICVGVIPTPAIAYLTRKYNADAGVVISASHNPVEYNGIKFFNKNGYKLSDELEDSIQALIKDDFKGVPVLTGENIGRKIEEDGEAIRDYIDFAKSTIKGDLKGLKVALDCANGASYITSVEAFKELGAEVHVINNKPDGININRNSGSTHPEDLMEYVVKNNCHMGLAFDGDADRCLAIDEKGNLINGDFILAICGKELKKQGRLKKNTIVVTVMSNLGLDIAMKKEEINTIKTKVGDRYVLEEMLKNDYAIGGEQSGHIIFSDYNTTGDGLVTALQLAHIVKERGKTFSELCSIMKELPQVLVNAKVPNDQKDIYLKDEEIKSEIDTITKNLDGSGRVLIRPSGTEPLVRVMLEGENQEEIDKLAHSLAKLIENKVK.

Ser100 (phosphoserine intermediate) is an active-site residue. Residues Ser100, Asp241, Asp243, and Asp245 each coordinate Mg(2+). The residue at position 100 (Ser100) is a Phosphoserine.

It belongs to the phosphohexose mutase family. Requires Mg(2+) as cofactor. Activated by phosphorylation.

It carries out the reaction alpha-D-glucosamine 1-phosphate = D-glucosamine 6-phosphate. Functionally, catalyzes the conversion of glucosamine-6-phosphate to glucosamine-1-phosphate. This chain is Phosphoglucosamine mutase, found in Clostridium botulinum (strain 657 / Type Ba4).